Consider the following 593-residue polypeptide: UvrABC system protein C (593 aa).

The region spanning 14 to 91 (DSPGCYLHKD…IQENMPKYNI (78 aa)) is the GIY-YIG domain. The UVR domain maps to 196 to 231 (NKIVNGLTEKMKSAAMTMEFERAAEYRDLIEAISLL).

This sequence belongs to the UvrC family. Interacts with UvrB in an incision complex.

Its subcellular location is the cytoplasm. Functionally, the UvrABC repair system catalyzes the recognition and processing of DNA lesions. UvrC both incises the 5' and 3' sides of the lesion. The N-terminal half is responsible for the 3' incision and the C-terminal half is responsible for the 5' incision. This chain is UvrABC system protein C, found in Streptococcus agalactiae serotype Ia (strain ATCC 27591 / A909 / CDC SS700).